Here is a 186-residue protein sequence, read N- to C-terminus: Myosin light chain 1, skeletal muscle isoform (186 aa).

Blocked amino end (Met) is present on M1. Residues 1 to 26 are disordered; sequence MPKAPAKKAEPAPAPAPAPEPAPAPA. Pro residues predominate over residues 12–26; sequence APAPAPAPEPAPAPA. EF-hand domains lie at 42–77 and 119–154; these read DQIE…LGQN and AGFE…LGEK.

As to quaternary structure, myosin is a hexamer of 2 heavy chains and 4 light chains.

In Chelon ramada (Thin-lipped grey mullet), this protein is Myosin light chain 1, skeletal muscle isoform.